Consider the following 84-residue polypeptide: MKSILWLCVFGLLIATLFPVSWQMAIKSRLSSEDSETDQRLFESKRHSDAIFTEEYSKLLAKLALQKYLASILGSRTSPPPPSR.

The signal sequence occupies residues 1-23 (MKSILWLCVFGLLIATLFPVSWQ). A propeptide spanning residues 24–44 (MAIKSRLSSEDSETDQRLFES) is cleaved from the precursor.

The protein belongs to the glucagon family. In terms of processing, an amidated Pro-81 is described. Such an amidation is however not compatible with the sequence displayed. Indeed cDNAs do not encode a Gly that could serve as substrate for peptide alpha-amidation. In terms of tissue distribution, expressed by the venom gland. Not expressed in the pancreas, liver, stomach, small intestine, lung, heart, kidney, spleen, ovary, and brain.

Its subcellular location is the secreted. In terms of biological role, has vasoactive intestinal peptide(VIP)/secretin-like biological activity. Interacts with rat and human VIP receptors 1 (VIPR1) and 2 (VIPR2), with the highest affinity for the human VIPR2. Induces hypotension that is mediated by relaxation of cardiac smooth muscle. This vasodilation may not be transduced by VIP or PACAP receptors. In Heloderma suspectum (Gila monster), this protein is Exendin-2-long.